Consider the following 557-residue polypeptide: Urocanate hydratase (557 aa).

NAD(+) contacts are provided by residues 52–53 (GG), Gln-130, 176–178 (GMG), Glu-196, 242–243 (NA), 263–267 (QTSAH), 273–274 (YL), and Tyr-322. Cys-410 is a catalytic residue. Gly-492 is a binding site for NAD(+).

Belongs to the urocanase family. It depends on NAD(+) as a cofactor.

The protein resides in the cytoplasm. It carries out the reaction 4-imidazolone-5-propanoate = trans-urocanate + H2O. The protein operates within amino-acid degradation; L-histidine degradation into L-glutamate; N-formimidoyl-L-glutamate from L-histidine: step 2/3. Its function is as follows. Catalyzes the conversion of urocanate to 4-imidazolone-5-propionate. The chain is Urocanate hydratase from Rhizobium meliloti (strain 1021) (Ensifer meliloti).